The chain runs to 55 residues: Large ribosomal subunit protein bL33 (55 aa).

It belongs to the bacterial ribosomal protein bL33 family.

This is Large ribosomal subunit protein bL33 from Sinorhizobium medicae (strain WSM419) (Ensifer medicae).